A 58-amino-acid polypeptide reads, in one-letter code: MMSLAKMYDKEYFEGKTYKEGYKFEIFYPFHKTIAEAIFEMFKPRIVLDVRMCYGISC.

This is an uncharacterized protein from Archaeoglobus fulgidus (strain ATCC 49558 / DSM 4304 / JCM 9628 / NBRC 100126 / VC-16).